The primary structure comprises 108 residues: Bublin coiled-coil protein (108 aa).

Disordered regions lie at residues 1 to 23 (MSGP…DDDF) and 67 to 108 (RLEF…DEGS). Residues 25-73 (SEEYEAINSMLDQINSYLDDLEERNDSLNGKLHELMESNRQARLEFRAQ) adopt a coiled-coil conformation. A compositionally biased stretch (basic and acidic residues) spans 99–108 (ENDKKIDEGS).

Belongs to the UPF0184 (EST00098) family.

It is found in the cell junction. The protein resides in the cytoplasm. It localises to the cytoskeleton. Functionally, essential for intermediate filament organization in intestinal cells, interacts with intermediate filament and regulates intestinal lumen morphology. The chain is Bublin coiled-coil protein (bbln) from Takifugu rubripes (Japanese pufferfish).